Reading from the N-terminus, the 298-residue chain is tRNA(Met) cytidine acetate ligase (298 aa).

Residues 6–19 (IAEY…HIYQ), glycine 100, asparagine 157, and arginine 182 contribute to the ATP site.

The protein belongs to the TmcAL family.

It is found in the cytoplasm. It catalyses the reaction cytidine(34) in elongator tRNA(Met) + acetate + ATP = N(4)-acetylcytidine(34) in elongator tRNA(Met) + AMP + diphosphate. Functionally, catalyzes the formation of N(4)-acetylcytidine (ac(4)C) at the wobble position of elongator tRNA(Met), using acetate and ATP as substrates. First activates an acetate ion to form acetyladenylate (Ac-AMP) and then transfers the acetyl group to tRNA to form ac(4)C34. In Mycoplasmopsis pulmonis (strain UAB CTIP) (Mycoplasma pulmonis), this protein is tRNA(Met) cytidine acetate ligase.